The sequence spans 721 residues: Cell wall protein RBT1 (721 aa).

The signal sequence occupies residues M1–A20. A Flo11 domain is found at G55–S278. Disordered regions lie at residues S278–T410, L453–E510, and T555–S666. Residues T454 to E499 show a composition bias toward low complexity. Polar residues predominate over residues T500–E510. Composition is skewed to low complexity over residues T555–T575 and S584–A663. A lipid anchor (GPI-anchor amidated serine) is attached at S696. A propeptide spans S697 to I721 (removed in mature form).

Belongs to the HWP1 family. The GPI-anchor is attached to the protein in the endoplasmic reticulum and serves to target the protein to the cell surface. There, the glucosamine-inositol phospholipid moiety is cleaved off and the GPI-modified mannoprotein is covalently attached via its lipidless GPI glycan remnant to the 1,6-beta-glucan of the outer cell wall layer.

It is found in the secreted. The protein resides in the cell wall. It localises to the membrane. Its function is as follows. GPI-anchored cell wall protein required for mating efficiency, biofilm formation, and virulence. Involved in normal disseminated infection, but not in intestinal colonization. The protein is Cell wall protein RBT1 (RBT1) of Candida albicans (strain SC5314 / ATCC MYA-2876) (Yeast).